We begin with the raw amino-acid sequence, 275 residues long: Adaptin ear-binding coat-associated protein 1 (275 aa).

The segment at 168-275 (AKKGGASKPR…APQPSNWVQF (108 aa)) is disordered. Residues 187–201 (LPPPPGGKVTIPPPS) show a composition bias toward pro residues. T211 is subject to Phosphothreonine. Positions 233–248 (SPAPVSTSAPAPVSTS) are enriched in low complexity. 2 consecutive short sequence motifs (WXXF motif) follow at residues 252–255 (WGDF) and 272–275 (WVQF). Positions 256–275 (STASSSVPNQAPQPSNWVQF) are enriched in polar residues.

It belongs to the NECAP family. Interacts with AP1G1 and AP2A1 components of the adapter protein complexes AP-1 and AP-2. Interacts with the GAE domain proteins GGA1, GGA2 and GGA3. As to expression, expressed primarily in brain (at protein level).

The protein localises to the cytoplasmic vesicle. The protein resides in the clathrin-coated vesicle membrane. It localises to the cell membrane. In terms of biological role, involved in endocytosis. The chain is Adaptin ear-binding coat-associated protein 1 (Necap1) from Mus musculus (Mouse).